Reading from the N-terminus, the 129-residue chain is Small ribosomal subunit protein uS11 (129 aa).

It belongs to the universal ribosomal protein uS11 family. Part of the 30S ribosomal subunit. Interacts with proteins S7 and S18. Binds to IF-3.

In terms of biological role, located on the platform of the 30S subunit, it bridges several disparate RNA helices of the 16S rRNA. Forms part of the Shine-Dalgarno cleft in the 70S ribosome. The protein is Small ribosomal subunit protein uS11 of Listeria innocua serovar 6a (strain ATCC BAA-680 / CLIP 11262).